Reading from the N-terminus, the 160-residue chain is Phosphopantetheine adenylyltransferase (160 aa).

Serine 9 provides a ligand contact to substrate. ATP is bound by residues 9-10 (SF) and histidine 17. Substrate is bound by residues lysine 41, leucine 73, and lysine 87. ATP-binding positions include 88 to 90 (GLR), glutamate 98, and 123 to 129 (YSYLSSS).

This sequence belongs to the bacterial CoaD family. Homohexamer. Requires Mg(2+) as cofactor.

It is found in the cytoplasm. The enzyme catalyses (R)-4'-phosphopantetheine + ATP + H(+) = 3'-dephospho-CoA + diphosphate. The protein operates within cofactor biosynthesis; coenzyme A biosynthesis; CoA from (R)-pantothenate: step 4/5. In terms of biological role, reversibly transfers an adenylyl group from ATP to 4'-phosphopantetheine, yielding dephospho-CoA (dPCoA) and pyrophosphate. This Clostridium tetani (strain Massachusetts / E88) protein is Phosphopantetheine adenylyltransferase.